The chain runs to 111 residues: Cornifelin (111 aa).

The protein belongs to the cornifelin family. As to quaternary structure, directly or indirectly cross-linked to CE proteins loricin and involucrin (IVL).

The protein resides in the cytoplasm. Functionally, part of the insoluble cornified cell envelope (CE) of stratified squamous epithelia. The polypeptide is Cornifelin (Cnfn) (Mus musculus (Mouse)).